The sequence spans 430 residues: UPF0597 protein BDI_1130 (430 aa).

The protein belongs to the UPF0597 family.

This chain is UPF0597 protein BDI_1130, found in Parabacteroides distasonis (strain ATCC 8503 / DSM 20701 / CIP 104284 / JCM 5825 / NCTC 11152).